We begin with the raw amino-acid sequence, 224 residues long: MITFDQLDTELQALENPNTIKIFRNHGCPDSLDLYGLKIGDLKKIIRREKLTKNHELAVELIESNNSDLIYLGLLAVNPNKVTTEQIEKWNVAFRETWSQLTFGLASIVSKRDDALLFAKKWIESEYDLTKSMGWQIYSEHINNLPEAEALLQRAKETLQSESNRTRYSMNGFIITCGIYKDDLHEKAIEAAKSVGKVHVNLGKTSCKVPDAISYIEKARNRVN.

This is an uncharacterized protein from Listeria innocua serovar 6a (strain ATCC BAA-680 / CLIP 11262).